The primary structure comprises 687 residues: Follicle-stimulating hormone receptor (687 aa).

A signal peptide spans 1–17 (MALLLVSLLAFLSLGSG). Residues 18–46 (CHHQVCHYSNRVFLCQESKVTEIPSDLPR) enclose the LRRNT domain. Residues 18-358 (CHHQVCHYSN…EDIMGYDILR (341 aa)) lie on the Extracellular side of the membrane. Residues C23 and C32 are joined by a disulfide bond. LRR repeat units lie at residues 49–72 (LELR…FGDL), 73–97 (KKIE…LPKL), 98–118 (HEIR…AFQN), 119–143 (LPNL…KIQS), 144–169 (LQKV…MGLS), 170–192 (FESM…AFNG), 193–216 (TQLD…VFQG), 217–240 (ASGP…GLEN), and 241–259 (LKKL…PSLE). Residues N191 and N199 are each glycosylated (N-linked (GlcNAc...) asparagine). 4 disulfide bridges follow: C275–C338, C276–C292, C276–C348, and C292–C330. N293 is a glycosylation site (N-linked (GlcNAc...) asparagine). Residue Y327 is modified to Sulfotyrosine. Residues 359–379 (VLIWFISILAITGNIIVLVIL) traverse the membrane as a helical segment. The Cytoplasmic segment spans residues 380-390 (ITSQYKLTVPR). Residues 391-413 (FLMCNLAFADLCIGIYLLLIASV) form a helical membrane-spanning segment. The Extracellular segment spans residues 414 to 435 (DIHTKSQYHNYAIDWQTGAGCD). C434 and C509 are joined by a disulfide. A helical membrane pass occupies residues 436–457 (AAGFFTVFGSELSVYTLTAITL). Residues 458-477 (ERWHTITHAMQLECKVQLRH) are Cytoplasmic-facing. The helical transmembrane segment at 478–500 (AASVMLVGWIFGFGVGLLPIFGI) threads the bilayer. Topologically, residues 501-520 (STYMKVSICLPMDIDSPLSQ) are extracellular. Residues 521–542 (LYVMSLLVLNVLAFVVICGCYT) traverse the membrane as a helical segment. Topologically, residues 543-565 (HIYLTVRNPNIVSSSSDTKIAKR) are cytoplasmic. A helical transmembrane segment spans residues 566-589 (MGILIFTDFLCMAPISFFGISASL). The Extracellular portion of the chain corresponds to 590-600 (KVALITVSKSK). The chain crosses the membrane as a helical span at residues 601-622 (ILLVLFYPINSCANPFLYAIFT). At 623-687 (KNFRRDFFIL…LVPLSHLAQN (65 aa)) the chain is on the cytoplasmic side.

This sequence belongs to the G-protein coupled receptor 1 family. FSH/LSH/TSH subfamily. Homotrimer. Functions as a homotrimer binding the FSH hormone heterodimer composed of CGA and FSHB. Interacts with ARRB2. Interacts with APPL2; interaction is independent of follicle stimulating hormone stimulation. N-glycosylated; indirectly required for FSH-binding, possibly via a conformational change that allows high affinity binding of hormone. In terms of processing, sulfated.

Its subcellular location is the cell membrane. In terms of biological role, g protein-coupled receptor for follitropin, the follicle-stimulating hormone. Through cAMP production activates the downstream PI3K-AKT and ERK1/ERK2 signaling pathways. This is Follicle-stimulating hormone receptor (FSHR) from Equus asinus (Donkey).